The following is a 216-amino-acid chain: 2-hydroxy-3-keto-5-methylthiopentenyl-1-phosphate phosphatase (216 aa).

The protein belongs to the HAD-like hydrolase superfamily. MtnX family.

The enzyme catalyses 2-hydroxy-5-methylsulfanyl-3-oxopent-1-enyl phosphate + H2O = 1,2-dihydroxy-5-(methylsulfanyl)pent-1-en-3-one + phosphate. It functions in the pathway amino-acid biosynthesis; L-methionine biosynthesis via salvage pathway; L-methionine from S-methyl-5-thio-alpha-D-ribose 1-phosphate: step 4/6. Functionally, dephosphorylates 2-hydroxy-3-keto-5-methylthiopentenyl-1-phosphate (HK-MTPenyl-1-P) yielding 1,2-dihydroxy-3-keto-5-methylthiopentene (DHK-MTPene). This is 2-hydroxy-3-keto-5-methylthiopentenyl-1-phosphate phosphatase from Exiguobacterium sp. (strain ATCC BAA-1283 / AT1b).